We begin with the raw amino-acid sequence, 398 residues long: Sphingosine 1-phosphate receptor 5 (398 aa).

The Extracellular portion of the chain corresponds to 1–40 (MEPGLLRPAPVSEVIVLHYNYTGKLRGARYQPGAGLRADA). A glycan (N-linked (GlcNAc...) asparagine) is linked at Asn-20. A helical membrane pass occupies residues 41–61 (VVCLAVCALIVLENLAVLVVL). Residues 62 to 70 (GRHPRFHAP) lie on the Cytoplasmic side of the membrane. A helical membrane pass occupies residues 71–91 (MFLLLGSLTLSDLLAGAAYAA). The Extracellular portion of the chain corresponds to 92-111 (NILLSGPLTLRLSPALWFAR). Residues 112-132 (EGGVFVALAASVLSLLAIALE) traverse the membrane as a helical segment. Topologically, residues 133–151 (RLLTMERRGPAPAARRGRT) are cytoplasmic. The helical transmembrane segment at 152 to 172 (LALAAGAWGVSLLLGLLPALG) threads the bilayer. The Extracellular segment spans residues 173–191 (WNCLGRLEACSTVLPLYAK). The chain crosses the membrane as a helical span at residues 192–212 (AYVLFCVLAFVGILAAICGLY). Residues 213–252 (ARIYCQVRAKAQRLRARPGAGEGTSARARGTPRSLALLRT) are Cytoplasmic-facing. Residues 253–273 (LSVVLVAFVACWGPLFLLLLL) form a helical membrane-spanning segment. Over 274–287 (DVACPARACPVLLQ) the chain is Extracellular. Residues 288-308 (ADPFLGLAMANSLLNPIIYTF) traverse the membrane as a helical segment. The Cytoplasmic segment spans residues 309–398 (TNRDLRHALL…QTLVPPPAAD (90 aa)). Cys-323 carries S-palmitoyl cysteine lipidation. A disordered region spans residues 332–398 (SGTSRSPGST…QTLVPPPAAD (67 aa)). A compositionally biased stretch (low complexity) spans 334 to 343 (TSRSPGSTLG). Phosphoserine is present on Ser-337. The span at 359–373 (SSSRSERSSPQRDGL) shows a compositional bias: basic and acidic residues. Ser-381 is modified (phosphoserine).

It belongs to the G-protein coupled receptor 1 family.

Its subcellular location is the cell membrane. In terms of biological role, receptor for the lysosphingolipid sphingosine 1-phosphate (S1P). S1P is a bioactive lysophospholipid that elicits diverse physiological effect on most types of cells and tissues. Is coupled to both the G(i/O)alpha and G(12) subclass of heteromeric G-proteins. The sequence is that of Sphingosine 1-phosphate receptor 5 (S1PR5) from Sus scrofa (Pig).